Reading from the N-terminus, the 378-residue chain is Erythronate-4-phosphate dehydrogenase (378 aa).

The substrate site is built by serine 45 and threonine 66. Residues aspartate 146 and threonine 175 each contribute to the NAD(+) site. Residue arginine 208 is part of the active site. Residue aspartate 232 coordinates NAD(+). Glutamate 237 is a catalytic residue. Histidine 254 acts as the Proton donor in catalysis. Glycine 257 is a binding site for NAD(+). Residue tyrosine 258 participates in substrate binding.

This sequence belongs to the D-isomer specific 2-hydroxyacid dehydrogenase family. PdxB subfamily. In terms of assembly, homodimer.

It is found in the cytoplasm. The catalysed reaction is 4-phospho-D-erythronate + NAD(+) = (R)-3-hydroxy-2-oxo-4-phosphooxybutanoate + NADH + H(+). The protein operates within cofactor biosynthesis; pyridoxine 5'-phosphate biosynthesis; pyridoxine 5'-phosphate from D-erythrose 4-phosphate: step 2/5. In terms of biological role, catalyzes the oxidation of erythronate-4-phosphate to 3-hydroxy-2-oxo-4-phosphonooxybutanoate. The polypeptide is Erythronate-4-phosphate dehydrogenase (Pectobacterium atrosepticum (strain SCRI 1043 / ATCC BAA-672) (Erwinia carotovora subsp. atroseptica)).